A 295-amino-acid chain; its full sequence is ATP synthase subunit a (295 aa).

Helical transmembrane passes span Lys-41–Phe-61, Tyr-101–Ala-121, Ile-129–Arg-149, Leu-161–Val-181, Leu-191–Leu-211, Phe-222–Ile-242, and Val-244–Ser-264.

This sequence belongs to the ATPase A chain family. As to quaternary structure, F-type ATPases have 2 components, CF(1) - the catalytic core - and CF(0) - the membrane proton channel. CF(1) has five subunits: alpha(3), beta(3), gamma(1), delta(1), epsilon(1). CF(0) has three main subunits: a(1), b(2) and c(9-12). The alpha and beta chains form an alternating ring which encloses part of the gamma chain. CF(1) is attached to CF(0) by a central stalk formed by the gamma and epsilon chains, while a peripheral stalk is formed by the delta and b chains.

It is found in the cell membrane. Its function is as follows. Key component of the proton channel; it plays a direct role in the translocation of protons across the membrane. In Parafrankia sp. (strain EAN1pec), this protein is ATP synthase subunit a.